Here is a 467-residue protein sequence, read N- to C-terminus: Methylenetetrahydrofolate--tRNA-(uracil-5-)-methyltransferase TrmFO (467 aa).

11–16 (GAGLAG) lines the FAD pocket.

This sequence belongs to the MnmG family. TrmFO subfamily. FAD is required as a cofactor.

Its subcellular location is the cytoplasm. The enzyme catalyses uridine(54) in tRNA + (6R)-5,10-methylene-5,6,7,8-tetrahydrofolate + NADH + H(+) = 5-methyluridine(54) in tRNA + (6S)-5,6,7,8-tetrahydrofolate + NAD(+). It carries out the reaction uridine(54) in tRNA + (6R)-5,10-methylene-5,6,7,8-tetrahydrofolate + NADPH + H(+) = 5-methyluridine(54) in tRNA + (6S)-5,6,7,8-tetrahydrofolate + NADP(+). Functionally, catalyzes the folate-dependent formation of 5-methyl-uridine at position 54 (M-5-U54) in all tRNAs. The protein is Methylenetetrahydrofolate--tRNA-(uracil-5-)-methyltransferase TrmFO of Prochlorococcus marinus (strain MIT 9303).